The sequence spans 242 residues: Triosephosphate isomerase (242 aa).

Residue 9–11 coordinates substrate; it reads NWK. The active-site Electrophile is histidine 99. Glutamate 169 acts as the Proton acceptor in catalysis. Residues glycine 175, serine 207, and 228–229 each bind substrate; that span reads GG.

Belongs to the triosephosphate isomerase family. As to quaternary structure, homodimer.

It localises to the cytoplasm. It catalyses the reaction D-glyceraldehyde 3-phosphate = dihydroxyacetone phosphate. The protein operates within carbohydrate biosynthesis; gluconeogenesis. Its pathway is carbohydrate degradation; glycolysis; D-glyceraldehyde 3-phosphate from glycerone phosphate: step 1/1. Functionally, involved in the gluconeogenesis. Catalyzes stereospecifically the conversion of dihydroxyacetone phosphate (DHAP) to D-glyceraldehyde-3-phosphate (G3P). This is Triosephosphate isomerase from Mycoplasma mobile (strain ATCC 43663 / 163K / NCTC 11711) (Mesomycoplasma mobile).